The chain runs to 862 residues: Leucine--tRNA ligase (862 aa).

The 'HIGH' region signature appears at 42-52 (PYPSGRLHMGH). A 'KMSKS' region motif is present at residues 622 to 626 (KMSKS). Lys-625 contacts ATP.

Belongs to the class-I aminoacyl-tRNA synthetase family.

The protein localises to the cytoplasm. It carries out the reaction tRNA(Leu) + L-leucine + ATP = L-leucyl-tRNA(Leu) + AMP + diphosphate. In Vibrio campbellii (strain ATCC BAA-1116), this protein is Leucine--tRNA ligase.